A 1080-amino-acid chain; its full sequence is DNA-directed RNA polymerase subunit beta (1080 aa).

Belongs to the RNA polymerase beta chain family. In terms of assembly, in plastids the minimal PEP RNA polymerase catalytic core is composed of four subunits: alpha, beta, beta', and beta''. When a (nuclear-encoded) sigma factor is associated with the core the holoenzyme is formed, which can initiate transcription.

It is found in the plastid. The protein resides in the chloroplast. The catalysed reaction is RNA(n) + a ribonucleoside 5'-triphosphate = RNA(n+1) + diphosphate. Functionally, DNA-dependent RNA polymerase catalyzes the transcription of DNA into RNA using the four ribonucleoside triphosphates as substrates. The polypeptide is DNA-directed RNA polymerase subunit beta (Mesostigma viride (Green alga)).